The primary structure comprises 375 residues: Leucoanthocyanidin dioxygenase 1 (375 aa).

In terms of domain architecture, Fe2OG dioxygenase spans 218–317 (LLLQLKINYY…RLSWVVFCEP (100 aa)). Residues H242, D244, and H298 each coordinate Fe cation. R308 serves as a coordination point for 2-oxoglutarate.

This sequence belongs to the iron/ascorbate-dependent oxidoreductase family. L-ascorbate serves as cofactor. It depends on Fe(2+) as a cofactor.

It carries out the reaction a (2R,3S,4S)-leucoanthocyanidin + 2-oxoglutarate + O2 = a 4-H-anthocyanidin with a 3-hydroxy group + succinate + CO2 + 2 H2O. The protein operates within pigment biosynthesis; anthocyanin biosynthesis. Its function is as follows. Involved in anthocyanin and protoanthocyanidin biosynthesis by catalyzing the oxidation of leucoanthocyanidins into anthocyanidins. This chain is Leucoanthocyanidin dioxygenase 1, found in Oryza sativa subsp. japonica (Rice).